Consider the following 486-residue polypeptide: 2-hydroxymuconic semialdehyde dehydrogenase (486 aa).

Catalysis depends on residues Glu-254 and Cys-288.

The protein belongs to the aldehyde dehydrogenase family.

The catalysed reaction is (2Z,4E)-2-hydroxy-6-oxohexa-2,4-dienoate + NAD(+) + H2O = (2Z,4E)-2-hydroxyhexa-2,4-dienedioate + NADH + 2 H(+). It functions in the pathway aromatic compound metabolism; benzoate degradation via hydroxylation. In terms of biological role, 2-hydroxymuconic acid semialdehyde can be converted to 2-hydroxypent-2,4-dienoate either directly by the action of 2-hydroxymuconic semialdehyde hydrolase (HMSH) or by the action of three sequential enzymes, the first of which is HMSD. The polypeptide is 2-hydroxymuconic semialdehyde dehydrogenase (dmpC) (Pseudomonas sp. (strain CF600)).